A 1235-amino-acid chain; its full sequence is Phosphorylase b kinase regulatory subunit alpha, liver isoform (1235 aa).

Residues serine 697, serine 731, and serine 737 each carry the phosphoserine modification. The segment at 808-838 (LSELYGKAGLNQEWGLIRYISGLLRKKVEVL) is calmodulin-binding. The span at 976–986 (SSASSPAISIH) shows a compositional bias: low complexity. The interval 976-1002 (SSASSPAISIHEVGHTGVTKTERSGIN) is disordered. Phosphoserine is present on residues serine 984, serine 1016, and serine 1044. Positions 1032–1053 (AYSKSVRSSTPSSPTGTSSSDS) are enriched in low complexity. A disordered region spans residues 1032-1060 (AYSKSVRSSTPSSPTGTSSSDSGGHHISW). Positions 1059-1099 (SWGERQGQWLRRRRLDGAINRVPVGFYQRVWKILQKCHGLS) are calmodulin-binding. Cysteine 1232 is lipidated: S-farnesyl cysteine.

Belongs to the phosphorylase b kinase regulatory chain family. As to quaternary structure, hexadecamer of 4 heterotetramers, each composed of alpha, beta, gamma, and delta subunits. Alpha (PHKA1 or PHKA2) and beta (PHKB) are regulatory subunits, gamma (PHKG1 or PHKG2) is the catalytic subunit, and delta is calmodulin. In terms of processing, although the final Cys may be farnesylated, the terminal tripeptide is probably not removed, and the C-terminus is not methylated. Predominantly expressed in liver and other non-muscle tissues.

The protein localises to the cell membrane. The protein operates within glycan biosynthesis; glycogen metabolism. Its activity is regulated as follows. By phosphorylation of various serine residues and by calcium. In terms of biological role, phosphorylase b kinase catalyzes the phosphorylation of serine in certain substrates, including troponin I. The alpha chain may bind calmodulin. The polypeptide is Phosphorylase b kinase regulatory subunit alpha, liver isoform (PHKA2) (Oryctolagus cuniculus (Rabbit)).